We begin with the raw amino-acid sequence, 162 residues long: NADH-quinone oxidoreductase subunit I (162 aa).

4Fe-4S ferredoxin-type domains follow at residues 53 to 83 and 93 to 122; these read LRRY…IEAE and TRYD…EGPN. The [4Fe-4S] cluster site is built by Cys-63, Cys-66, Cys-69, Cys-73, Cys-102, Cys-105, Cys-108, and Cys-112.

The protein belongs to the complex I 23 kDa subunit family. In terms of assembly, NDH-1 is composed of 14 different subunits. Subunits NuoA, H, J, K, L, M, N constitute the membrane sector of the complex. The cofactor is [4Fe-4S] cluster.

Its subcellular location is the cell inner membrane. The enzyme catalyses a quinone + NADH + 5 H(+)(in) = a quinol + NAD(+) + 4 H(+)(out). In terms of biological role, NDH-1 shuttles electrons from NADH, via FMN and iron-sulfur (Fe-S) centers, to quinones in the respiratory chain. The immediate electron acceptor for the enzyme in this species is believed to be ubiquinone. Couples the redox reaction to proton translocation (for every two electrons transferred, four hydrogen ions are translocated across the cytoplasmic membrane), and thus conserves the redox energy in a proton gradient. The protein is NADH-quinone oxidoreductase subunit I of Maricaulis maris (strain MCS10) (Caulobacter maris).